Consider the following 132-residue polypeptide: Small ribosomal subunit protein uS8 (132 aa).

Belongs to the universal ribosomal protein uS8 family. Part of the 30S ribosomal subunit. Contacts proteins S5 and S12.

Functionally, one of the primary rRNA binding proteins, it binds directly to 16S rRNA central domain where it helps coordinate assembly of the platform of the 30S subunit. This is Small ribosomal subunit protein uS8 from Anoxybacillus flavithermus (strain DSM 21510 / WK1).